Reading from the N-terminus, the 170-residue chain is Interferon gamma (170 aa).

The first 20 residues, 1-20, serve as a signal peptide directing secretion; it reads MNSRLCIMALLLCFSQALLG. 2 N-linked (GlcNAc...) asparagine glycosylation sites follow: Asn-36 and Asn-103.

This sequence belongs to the type II (or gamma) interferon family. As to quaternary structure, homodimer. Interacts with IFNGR1 (via extracellular domain); this interaction promotes IFNGR1 dimerization. Released primarily from activated T lymphocytes.

The protein resides in the secreted. Its function is as follows. Type II interferon produced by immune cells such as T-cells and NK cells that plays crucial roles in antimicrobial, antiviral, and antitumor responses by activating effector immune cells and enhancing antigen presentation. Primarily signals through the JAK-STAT pathway after interaction with its receptor IFNGR1 to affect gene regulation. Upon IFNG binding, IFNGR1 intracellular domain opens out to allow association of downstream signaling components JAK2, JAK1 and STAT1, leading to STAT1 activation, nuclear translocation and transcription of IFNG-regulated genes. Many of the induced genes are transcription factors such as IRF1 that are able to further drive regulation of a next wave of transcription. Plays a role in class I antigen presentation pathway by inducing a replacement of catalytic proteasome subunits with immunoproteasome subunits. In turn, increases the quantity, quality, and repertoire of peptides for class I MHC loading. Increases the efficiency of peptide generation also by inducing the expression of activator PA28 that associates with the proteasome and alters its proteolytic cleavage preference. Up-regulates as well MHC II complexes on the cell surface by promoting expression of several key molecules such as cathepsins B/CTSB, H/CTSH, and L/CTSL. Participates in the regulation of hematopoietic stem cells during development and under homeostatic conditions by affecting their development, quiescence, and differentiation. In Sigmodon hispidus (Hispid cotton rat), this protein is Interferon gamma (IFNG).